The chain runs to 486 residues: Glycogen synthase (486 aa).

Lys15 contacts ADP-alpha-D-glucose.

Belongs to the glycosyltransferase 1 family. Bacterial/plant glycogen synthase subfamily.

The enzyme catalyses [(1-&gt;4)-alpha-D-glucosyl](n) + ADP-alpha-D-glucose = [(1-&gt;4)-alpha-D-glucosyl](n+1) + ADP + H(+). Its pathway is glycan biosynthesis; glycogen biosynthesis. Its function is as follows. Synthesizes alpha-1,4-glucan chains using ADP-glucose. This Pseudothermotoga lettingae (strain ATCC BAA-301 / DSM 14385 / NBRC 107922 / TMO) (Thermotoga lettingae) protein is Glycogen synthase.